The following is a 482-amino-acid chain: UDP-N-acetylmuramate--L-alanine ligase (482 aa).

123 to 129 (GTHGKTT) contributes to the ATP binding site.

This sequence belongs to the MurCDEF family.

Its subcellular location is the cytoplasm. The catalysed reaction is UDP-N-acetyl-alpha-D-muramate + L-alanine + ATP = UDP-N-acetyl-alpha-D-muramoyl-L-alanine + ADP + phosphate + H(+). The protein operates within cell wall biogenesis; peptidoglycan biosynthesis. In terms of biological role, cell wall formation. The polypeptide is UDP-N-acetylmuramate--L-alanine ligase (Pseudomonas putida (strain W619)).